The chain runs to 279 residues: Ribosomal RNA small subunit methyltransferase A (279 aa).

His10, Leu12, Gly37, Glu58, Asp83, and Asn108 together coordinate S-adenosyl-L-methionine.

It belongs to the class I-like SAM-binding methyltransferase superfamily. rRNA adenine N(6)-methyltransferase family. RsmA subfamily.

It localises to the cytoplasm. The enzyme catalyses adenosine(1518)/adenosine(1519) in 16S rRNA + 4 S-adenosyl-L-methionine = N(6)-dimethyladenosine(1518)/N(6)-dimethyladenosine(1519) in 16S rRNA + 4 S-adenosyl-L-homocysteine + 4 H(+). Functionally, specifically dimethylates two adjacent adenosines (A1518 and A1519) in the loop of a conserved hairpin near the 3'-end of 16S rRNA in the 30S particle. May play a critical role in biogenesis of 30S subunits. The polypeptide is Ribosomal RNA small subunit methyltransferase A (Synechococcus elongatus (strain ATCC 33912 / PCC 7942 / FACHB-805) (Anacystis nidulans R2)).